Reading from the N-terminus, the 111-residue chain is MFGGKGGMGNLMKQAQQMQDRMQKMQEEIANMEVTGESGAGLVKVTITGSHSVRRVEIDPSLMEEDEKEMLEDLIAAAFNDASRRIEETQKEKMASVTGGMQMPPGFKMPF.

2 disordered regions span residues 1–23 (MFGG…DRMQ) and 89–111 (TQKE…KMPF).

Belongs to the YbaB/EbfC family. As to quaternary structure, homodimer.

The protein localises to the cytoplasm. Its subcellular location is the nucleoid. Its function is as follows. Binds to DNA and alters its conformation. May be involved in regulation of gene expression, nucleoid organization and DNA protection. This chain is Nucleoid-associated protein VF_1686, found in Aliivibrio fischeri (strain ATCC 700601 / ES114) (Vibrio fischeri).